A 273-amino-acid chain; its full sequence is Undecaprenyl-diphosphatase (273 aa).

A run of 7 helical transmembrane segments spans residues Ala45–Trp65, Leu90–His110, Leu116–Ala136, Tyr154–Ser173, Tyr190–Leu210, Ala222–Ile242, and Ile252–Phe272.

Belongs to the UppP family.

It is found in the cell inner membrane. It catalyses the reaction di-trans,octa-cis-undecaprenyl diphosphate + H2O = di-trans,octa-cis-undecaprenyl phosphate + phosphate + H(+). In terms of biological role, catalyzes the dephosphorylation of undecaprenyl diphosphate (UPP). Confers resistance to bacitracin. The chain is Undecaprenyl-diphosphatase from Enterobacter sp. (strain 638).